The sequence spans 200 residues: ATP-dependent Clp protease proteolytic subunit 2 (200 aa).

The Nucleophile role is filled by Ser-101. His-126 is a catalytic residue.

It belongs to the peptidase S14 family. As to quaternary structure, fourteen ClpP subunits assemble into 2 heptameric rings which stack back to back to give a disk-like structure with a central cavity, resembling the structure of eukaryotic proteasomes.

Its subcellular location is the cytoplasm. The catalysed reaction is Hydrolysis of proteins to small peptides in the presence of ATP and magnesium. alpha-casein is the usual test substrate. In the absence of ATP, only oligopeptides shorter than five residues are hydrolyzed (such as succinyl-Leu-Tyr-|-NHMec, and Leu-Tyr-Leu-|-Tyr-Trp, in which cleavage of the -Tyr-|-Leu- and -Tyr-|-Trp bonds also occurs).. Functionally, cleaves peptides in various proteins in a process that requires ATP hydrolysis. Has a chymotrypsin-like activity. Plays a major role in the degradation of misfolded proteins. In Prochlorococcus marinus (strain NATL2A), this protein is ATP-dependent Clp protease proteolytic subunit 2.